Here is a 279-residue protein sequence, read N- to C-terminus: Protein COP1 SUPPRESSOR 2 (279 aa).

2 disordered regions span residues 1 to 29 (MPPK…ISEE) and 57 to 79 (SSTA…EGEK). A compositionally biased stretch (basic and acidic residues) spans 68-79 (KPVEKTETEGEK). Residues 86 to 183 (DTFAQETAVL…EETEAAKKLL (98 aa)) adopt a coiled-coil conformation. Residues 217–229 (LRREHPELYKDRG) are compositionally biased toward basic and acidic residues. Positions 217 to 279 (LRREHPELYK…KRERNRVMRR (63 aa)) are disordered. A compositionally biased stretch (polar residues) spans 250 to 260 (ADSGKSRQAAT). Positions 270–279 (KRERNRVMRR) are enriched in basic residues.

The protein belongs to the TLS1 family. Interacts with COP1.

It is found in the nucleus. The protein resides in the nucleus speckle. Functionally, inhibits E3 ubiquitin-protein ligase activity of COP1, a central repressor of seedling photomorphogenesis. Represses COP1-mediated turnover of HY5 in the dark. Required for primary root development under normal light growth conditions. In Arabidopsis thaliana (Mouse-ear cress), this protein is Protein COP1 SUPPRESSOR 2.